Consider the following 517-residue polypeptide: Nucleoside transporter FUN26 (517 aa).

The segment at 1-63 (MSTSADTDTI…EREQSVSTEP (63 aa)) is disordered. Basic and acidic residues predominate over residues 25–44 (THSEEISRSGEEHESENNEH). Residues Ser45 and Ser58 each carry the phosphoserine modification. Helical transmembrane passes span 76-96 (LSYI…NCIL), 116-136 (IFTS…NIYL), 151-171 (LVWE…HFLL), 174-194 (WFNF…TAMT), 214-234 (MVGQ…LAFI), 243-263 (GGIL…VVMF), 344-364 (LVLS…FASA), 367-387 (VTGL…LWNL), 411-431 (TFIY…FTAI), 446-466 (IVDL…GHVI), and 492-512 (IFVS…VFII).

This sequence belongs to the SLC29A/ENT transporter (TC 2.A.57) family.

It is found in the membrane. Functionally, has broad nucleoside selectivity (uridine, adenosine and cytidine) and most likely functions to transport nucleosides across intracellular membranes. This Saccharomyces cerevisiae (strain ATCC 204508 / S288c) (Baker's yeast) protein is Nucleoside transporter FUN26 (FUN26).